The following is a 788-amino-acid chain: Pyridoxal-dependent decarboxylase domain-containing protein 1 (788 aa).

Basic and acidic residues predominate over residues 28-40; sequence EDSQRRTEEENGK. The interval 28 to 51 is disordered; sequence EDSQRRTEEENGKKLISGDIPGPL. Threonine 414 is modified (phosphothreonine). Serine 652 is subject to Phosphoserine. Residues 684 to 788 are disordered; sequence AGVTLPPTPS…SQVEGPESLR (105 aa). Threonine 687 and threonine 691 each carry phosphothreonine. Phosphoserine is present on residues serine 710, serine 718, and serine 722. Positions 725 to 734 are enriched in basic and acidic residues; sequence HIEDLEKVER. Residues 738 to 750 show a composition bias toward polar residues; it reads GPEQITLEASSTE. Phosphoserine is present on residues serine 748, serine 757, serine 779, and serine 786. Over residues 772–788 the composition is skewed to basic and acidic residues; it reads PHPEDDHSQVEGPESLR.

It belongs to the group II decarboxylase family. It depends on pyridoxal 5'-phosphate as a cofactor.

The polypeptide is Pyridoxal-dependent decarboxylase domain-containing protein 1 (PDXDC1) (Homo sapiens (Human)).